The chain runs to 461 residues: Adenosylmethionine-8-amino-7-oxononanoate aminotransferase (461 aa).

117 to 118 (GA) is a pyridoxal 5'-phosphate binding site. Tyr-150 is a binding site for substrate. Asp-263 contributes to the pyridoxal 5'-phosphate binding site. Substrate contacts are provided by Lys-296, Gly-331, and Arg-426. Lys-296 is subject to N6-(pyridoxal phosphate)lysine.

It belongs to the class-III pyridoxal-phosphate-dependent aminotransferase family. BioA subfamily. Homodimer. Pyridoxal 5'-phosphate serves as cofactor.

It is found in the cytoplasm. It carries out the reaction (8S)-8-amino-7-oxononanoate + S-adenosyl-L-methionine = S-adenosyl-4-methylsulfanyl-2-oxobutanoate + (7R,8S)-7,8-diammoniononanoate. It participates in cofactor biosynthesis; biotin biosynthesis; 7,8-diaminononanoate from 8-amino-7-oxononanoate (SAM route): step 1/1. In terms of biological role, catalyzes the transfer of the alpha-amino group from S-adenosyl-L-methionine (SAM) to 7-keto-8-aminopelargonic acid (KAPA) to form 7,8-diaminopelargonic acid (DAPA). It is the only aminotransferase known to utilize SAM as an amino donor. This chain is Adenosylmethionine-8-amino-7-oxononanoate aminotransferase, found in Methanocaldococcus jannaschii (strain ATCC 43067 / DSM 2661 / JAL-1 / JCM 10045 / NBRC 100440) (Methanococcus jannaschii).